Here is a 365-residue protein sequence, read N- to C-terminus: tRNA(Met) cytidine acetate ligase (365 aa).

Residues 7-20 (IAEF…HKYL), Gly96, Asn152, and Arg175 each bind ATP.

This sequence belongs to the TmcAL family.

Its subcellular location is the cytoplasm. It catalyses the reaction cytidine(34) in elongator tRNA(Met) + acetate + ATP = N(4)-acetylcytidine(34) in elongator tRNA(Met) + AMP + diphosphate. Its function is as follows. Catalyzes the formation of N(4)-acetylcytidine (ac(4)C) at the wobble position of elongator tRNA(Met), using acetate and ATP as substrates. First activates an acetate ion to form acetyladenylate (Ac-AMP) and then transfers the acetyl group to tRNA to form ac(4)C34. The protein is tRNA(Met) cytidine acetate ligase of Streptococcus pneumoniae (strain ATCC BAA-255 / R6).